A 147-amino-acid chain; its full sequence is Angiogenin (147 aa).

A signal peptide spans 1-24 (MVMGLGVLLLVFVLGLGLTPPTLA). A Pyrrolidone carboxylic acid modification is found at glutamine 25. Catalysis depends on histidine 37, which acts as the Proton acceptor. Positions 45 and 46 each coordinate tRNA. 3 disulfide bridges follow: cysteine 50–cysteine 105, cysteine 63–cysteine 116, and cysteine 81–cysteine 131. The Nucleolar localization signal signature appears at 55-59 (RRRGL). Cysteine 105 and valine 127 together coordinate tRNA. Catalysis depends on histidine 138, which acts as the Proton donor.

Belongs to the pancreatic ribonuclease family. In terms of assembly, homodimer. Interacts with RNH1; inhibiting ANG ribonuclease activity. Interacts with PCNA.

The protein resides in the secreted. The protein localises to the nucleus. Its subcellular location is the nucleolus. It localises to the cytoplasm. It is found in the stress granule. Has weak tRNA ribonuclease activity by itself due to partial autoinhibition by its C-terminus, which folds into a short alpha-helix that partially occludes the substrate-binding site. In absence of stress, the ribonuclease activity is inhibited by RNH1 in the cytoplasm. In response to stress, dissociates from RNH1 in the cytoplasm and associates with cytoplasmic ribosomes with vacant A-sites: ribosomes directly activate the tRNA ribonuclease activity of ANG by refolding the C-terminal alpha-helix. In response to stress, the angiogenic activity of ANG is inhibited by RNH1 in the nucleus. Secreted ribonuclease that can either promote or restrict cell proliferation of target cells, depending on the context. Endocytosed in target cells via its receptor PLXNB2 and translocates to the cytoplasm or nucleus. Under stress conditions, localizes to the cytoplasm and promotes the assembly of stress granules (SGs): specifically cleaves a subset of tRNAs within anticodon loops to produce tRNA-derived stress-induced fragments (tiRNAs), resulting in translation repression and inhibition of cell proliferation. tiRNas also prevent formation of apoptosome, thereby promoting cell survival. Preferentially cleaves RNAs between a pyrimidine and an adenosine residue, suggesting that it cleaves the anticodon loop of tRNA(Ala) (32-UUAGCAU-38) after positions 33 and 36. Cleaves a subset of tRNAs, including tRNA(Ala), tRNA(Glu), tRNA(Gly), tRNA(Lys), tRNA(Val), tRNA(His), tRNA(Asp) and tRNA(Sec). Under growth conditions and in differentiated cells, translocates to the nucleus and stimulates ribosomal RNA (rRNA) transcription, including that containing the initiation site sequences of 45S rRNA, thereby promoting cell growth and proliferation. Angiogenin induces vascularization of normal and malignant tissues via its ability to promote rRNA transcription. Involved in hematopoietic stem and progenitor cell (HSPC) growth and survival by promoting rRNA transcription in growth conditions and inhibiting translation in response to stress, respectively. Mediates the crosstalk between myeloid and intestinal epithelial cells to protect the intestinal epithelial barrier integrity: secreted by myeloid cells and promotes intestinal epithelial cells proliferation and survival. Also mediates osteoclast-endothelial cell crosstalk in growing bone: produced by osteoclasts and protects the neighboring vascular cells against senescence by promoting rRNA transcription. This chain is Angiogenin (ANG), found in Gorilla gorilla gorilla (Western lowland gorilla).